Here is a 347-residue protein sequence, read N- to C-terminus: Phosphoribosylformylglycinamidine cyclo-ligase (347 aa).

Belongs to the AIR synthase family.

The protein resides in the cytoplasm. It carries out the reaction 2-formamido-N(1)-(5-O-phospho-beta-D-ribosyl)acetamidine + ATP = 5-amino-1-(5-phospho-beta-D-ribosyl)imidazole + ADP + phosphate + H(+). It participates in purine metabolism; IMP biosynthesis via de novo pathway; 5-amino-1-(5-phospho-D-ribosyl)imidazole from N(2)-formyl-N(1)-(5-phospho-D-ribosyl)glycinamide: step 2/2. The chain is Phosphoribosylformylglycinamidine cyclo-ligase from Yersinia pseudotuberculosis serotype IB (strain PB1/+).